We begin with the raw amino-acid sequence, 485 residues long: RAC-beta serine/threonine-protein kinase B (485 aa).

Residues 5–109 (MVIKEGWLQK…WIIAIQTVAN (105 aa)) form the PH domain. 2 O-linked (GlcNAc) serine glycosylation sites follow: S132 and S135. The Protein kinase domain maps to 156-413 (FDYLKLLGKG…AQEVMSHGFF (258 aa)). ATP is bound by residues 162-170 (LGKGTFGKV) and K185. The Proton acceptor role is filled by D279. T310 carries O-linked (GlcNAc) threonine glycosylation. Position 313 is a phosphothreonine (T313). T317 carries an O-linked (GlcNAc) threonine glycan. One can recognise an AGC-kinase C-terminal domain in the interval 414–485 (ASINWQDVTE…QFSYSSSIRE (72 aa)). The segment at 454–485 (LTPPDRYDNLDALESEQRPHFPQFSYSSSIRE) is disordered. Positions 458–472 (DRYDNLDALESEQRP) are enriched in basic and acidic residues. S478 is modified (phosphoserine). S478 carries O-linked (GlcNAc) serine; alternate glycosylation.

The protein belongs to the protein kinase superfamily. AGC Ser/Thr protein kinase family. RAC subfamily. Post-translationally, phosphorylation on Thr-313 and Ser-478 is required for full activity. Phosphorylation of the activation loop at Thr-313 by PDPK1/PDK1 is a prerequisite for full activation. Phosphorylation by mTORC2 at Ser-478 in response to growth factors plays a key role in AKT1 activation by facilitating subsequent phosphorylation of the activation loop by PDPK1/PDK1.

The enzyme catalyses L-seryl-[protein] + ATP = O-phospho-L-seryl-[protein] + ADP + H(+). It catalyses the reaction L-threonyl-[protein] + ATP = O-phospho-L-threonyl-[protein] + ADP + H(+). With respect to regulation, two specific sites, one in the kinase domain (Thr-313) and the other in the C-terminal regulatory region (Ser-478), need to be phosphorylated for its full activation. Its function is as follows. Akt2-b is one of several closely related serine/threonine-protein kinases known as the AKT kinase, and which regulate many processes including metabolism, proliferation, cell survival, growth and angiogenesis. This is mediated through serine and/or threonine phosphorylation of a range of downstream substrates. Over 100 substrate candidates have been reported so far, but for most of them, no isoform specificity has been reported. May be involved in the inhibition of ciliogenesis. The chain is RAC-beta serine/threonine-protein kinase B (akt2-b) from Xenopus laevis (African clawed frog).